Here is a 294-residue protein sequence, read N- to C-terminus: uncharacterized protein (294 aa).

An N-terminal signal peptide occupies residues Met-1–Ala-18.

This is an uncharacterized protein from Rickettsia bellii (strain RML369-C).